A 115-amino-acid chain; its full sequence is Photosystem II reaction center Psb28 protein (115 aa).

Belongs to the Psb28 family. Part of the photosystem II complex.

It is found in the plastid. The protein resides in the chloroplast thylakoid membrane. This Cyanidium caldarium (Red alga) protein is Photosystem II reaction center Psb28 protein.